Consider the following 505-residue polypeptide: Maturase K (505 aa).

The protein belongs to the intron maturase 2 family. MatK subfamily.

The protein resides in the plastid. The protein localises to the chloroplast. Its function is as follows. Usually encoded in the trnK tRNA gene intron. Probably assists in splicing its own and other chloroplast group II introns. The protein is Maturase K of Gomphrena pulchella (Globe amaranth).